The chain runs to 146 residues: Protein STIG1 (146 aa).

The first 23 residues, 1–23 (MAFINLLILIILTLSSTPITTMS), serve as a signal peptide directing secretion. N31, N61, and N84 each carry an N-linked (GlcNAc...) asparagine glycan.

The protein belongs to the STIG1 family. In terms of processing, glycosylated. In terms of tissue distribution, expressed exclusively in the stigmatic secretory zone.

The protein localises to the secreted. Functionally, involved in the temporal regulation of the exudate secretion onto the stigma. This chain is Protein STIG1, found in Nicotiana tabacum (Common tobacco).